Consider the following 243-residue polypeptide: Ribosomal RNA small subunit methyltransferase G (243 aa).

S-adenosyl-L-methionine-binding positions include glycine 97, leucine 102, 148 to 149 (VE), and arginine 161.

Belongs to the methyltransferase superfamily. RNA methyltransferase RsmG family.

It localises to the cytoplasm. The catalysed reaction is guanosine(527) in 16S rRNA + S-adenosyl-L-methionine = N(7)-methylguanosine(527) in 16S rRNA + S-adenosyl-L-homocysteine. Its function is as follows. Specifically methylates the N7 position of guanine in position 527 of 16S rRNA. The sequence is that of Ribosomal RNA small subunit methyltransferase G from Paracidovorax citrulli (strain AAC00-1) (Acidovorax citrulli).